A 216-amino-acid polypeptide reads, in one-letter code: Orotidine 5'-phosphate decarboxylase (216 aa).

Residues D12, K34, 62 to 71 (DFKVADIDAT), S119, 172 to 182 (PGVGFQGGNAK), G194, and R195 contribute to the substrate site. Residue K64 is the Proton donor of the active site.

It belongs to the OMP decarboxylase family. Type 1 subfamily. As to quaternary structure, homodimer.

It catalyses the reaction orotidine 5'-phosphate + H(+) = UMP + CO2. It functions in the pathway pyrimidine metabolism; UMP biosynthesis via de novo pathway; UMP from orotate: step 2/2. In terms of biological role, catalyzes the decarboxylation of orotidine 5'-monophosphate (OMP) to uridine 5'-monophosphate (UMP). The sequence is that of Orotidine 5'-phosphate decarboxylase from Methanosphaera stadtmanae (strain ATCC 43021 / DSM 3091 / JCM 11832 / MCB-3).